The chain runs to 404 residues: Sialidase (404 aa).

The N-terminal stretch at 1–27 (MKKFIKILKVLSMAIVLSACNINGIFA) is a signal peptide. Residue Arg55 coordinates substrate. The active-site Proton acceptor is Asp80. BNR repeat units lie at residues 89-100 (AKSTDNGQTWDY), 158-169 (VYSDDNGETWSD), and 226-237 (IYSKDNGETWTM). Arg263 is a substrate binding site. The stretch at 273–284 (YISYDMGSTWEV) is one BNR 4 repeat. Tyr365 serves as the catalytic Nucleophile.

Belongs to the glycosyl hydrolase 33 family. In terms of processing, it is possible that the sialidase is cleaved in front of a cysteine within the leader peptide, forming a glyceride thioether bond which links the protein to the membrane. A second proteolytic cleavage releases the mature extracellular protein.

Its subcellular location is the secreted. It catalyses the reaction Hydrolysis of alpha-(2-&gt;3)-, alpha-(2-&gt;6)-, alpha-(2-&gt;8)- glycosidic linkages of terminal sialic acid residues in oligosaccharides, glycoproteins, glycolipids, colominic acid and synthetic substrates.. Sialidases have been suggested to be pathogenic factors in microbial infections. The polypeptide is Sialidase (Paraclostridium sordellii (Clostridium sordellii)).